We begin with the raw amino-acid sequence, 264 residues long: Thymidylate synthase (264 aa).

Arginine 21 contributes to the dUMP binding site. Histidine 51 serves as a coordination point for (6R)-5,10-methylene-5,6,7,8-tetrahydrofolate. 126 to 127 (RR) lines the dUMP pocket. Cysteine 146 serves as the catalytic Nucleophile. DUMP-binding positions include 166–169 (RSAD), asparagine 177, and 207–209 (HLY). A (6R)-5,10-methylene-5,6,7,8-tetrahydrofolate-binding site is contributed by aspartate 169. Alanine 263 is a binding site for (6R)-5,10-methylene-5,6,7,8-tetrahydrofolate.

It belongs to the thymidylate synthase family. Bacterial-type ThyA subfamily. In terms of assembly, homodimer.

The protein resides in the cytoplasm. It catalyses the reaction dUMP + (6R)-5,10-methylene-5,6,7,8-tetrahydrofolate = 7,8-dihydrofolate + dTMP. The protein operates within pyrimidine metabolism; dTTP biosynthesis. Catalyzes the reductive methylation of 2'-deoxyuridine-5'-monophosphate (dUMP) to 2'-deoxythymidine-5'-monophosphate (dTMP) while utilizing 5,10-methylenetetrahydrofolate (mTHF) as the methyl donor and reductant in the reaction, yielding dihydrofolate (DHF) as a by-product. This enzymatic reaction provides an intracellular de novo source of dTMP, an essential precursor for DNA biosynthesis. This chain is Thymidylate synthase, found in Legionella pneumophila (strain Lens).